An 88-amino-acid polypeptide reads, in one-letter code: Small ribosomal subunit protein bS16c (88 aa).

Belongs to the bacterial ribosomal protein bS16 family.

The protein localises to the plastid. The protein resides in the chloroplast. This Oenothera elata subsp. hookeri (Hooker's evening primrose) protein is Small ribosomal subunit protein bS16c.